Reading from the N-terminus, the 154-residue chain is 6,7-dimethyl-8-ribityllumazine synthase (154 aa).

Residues Phe22, 56-58 (AFE), and 81-83 (VLI) each bind 5-amino-6-(D-ribitylamino)uracil. Residue 86–87 (ET) coordinates (2S)-2-hydroxy-3-oxobutyl phosphate. The active-site Proton donor is the His89. Leu114 serves as a coordination point for 5-amino-6-(D-ribitylamino)uracil. Residue Arg128 coordinates (2S)-2-hydroxy-3-oxobutyl phosphate.

The protein belongs to the DMRL synthase family.

The enzyme catalyses (2S)-2-hydroxy-3-oxobutyl phosphate + 5-amino-6-(D-ribitylamino)uracil = 6,7-dimethyl-8-(1-D-ribityl)lumazine + phosphate + 2 H2O + H(+). It functions in the pathway cofactor biosynthesis; riboflavin biosynthesis; riboflavin from 2-hydroxy-3-oxobutyl phosphate and 5-amino-6-(D-ribitylamino)uracil: step 1/2. Catalyzes the formation of 6,7-dimethyl-8-ribityllumazine by condensation of 5-amino-6-(D-ribitylamino)uracil with 3,4-dihydroxy-2-butanone 4-phosphate. This is the penultimate step in the biosynthesis of riboflavin. This Chlamydia pneumoniae (Chlamydophila pneumoniae) protein is 6,7-dimethyl-8-ribityllumazine synthase.